We begin with the raw amino-acid sequence, 70 residues long: Large ribosomal subunit protein bL31 (70 aa).

Cysteine 16, cysteine 18, cysteine 37, and cysteine 40 together coordinate Zn(2+).

Belongs to the bacterial ribosomal protein bL31 family. Type A subfamily. As to quaternary structure, part of the 50S ribosomal subunit. The cofactor is Zn(2+).

Functionally, binds the 23S rRNA. This chain is Large ribosomal subunit protein bL31, found in Histophilus somni (strain 2336) (Haemophilus somnus).